The chain runs to 139 residues: Interleukin-5 (139 aa).

The signal sequence occupies residues 1–19 (MMKILVCLPLLTLYAGCVY). N-linked (GlcNAc...) asparagine glycosylation is found at Asn-48, Asn-77, and Asn-91.

It belongs to the IL-5 family. In terms of assembly, homodimer; disulfide-linked. Interacts with IL5RA. Interacts with CSF2RB.

It is found in the secreted. Homodimeric cytokine expressed predominantly by T-lymphocytes and NK cells that plays an important role in the survival, differentiation, and chemotaxis of eosinophils. Also acts on activated and resting B-cells to induce immunoglobulin production, growth, and differentiation. Mechanistically, exerts its biological effects through a receptor composed of IL5RA subunit and the cytokine receptor common subunit beta/CSF2RB. Binding to the receptor leads to activation of various kinases including LYN, SYK and JAK2 and thereby propagates signals through the RAS-MAPK and JAK-STAT5 pathways respectively. This Notamacropus eugenii (Tammar wallaby) protein is Interleukin-5 (IL5).